The following is a 95-amino-acid chain: Small ubiquitin-related modifier 4 (95 aa).

The region spanning 17-95 is the Ubiquitin-like domain; it reads HINLKVAGQD…VFQQPTGGVY (79 aa). Residue Gly93 forms a Glycyl lysine isopeptide (Gly-Lys) (interchain with K-? in acceptor proteins) linkage. The propeptide occupies 94–95; sequence VY.

This sequence belongs to the ubiquitin family. SUMO subfamily. Interacts with SAE2. Covalently attached to a number of proteins. In contrast to SUMO1, SUMO2 and SUMO3, seems to be insensitive to sentrin-specific proteases due to the presence of Pro-90. This may impair processing to mature form and conjugation to substrates. Expressed mainly in adult and embryonic kidney. Expressed at various levels in immune tissues, with the highest expression in the lymph node and spleen.

In terms of biological role, ubiquitin-like protein which can be covalently attached to target lysines as a monomer. Does not seem to be involved in protein degradation and may modulate protein subcellular localization, stability or activity. Upon oxidative stress, conjugates to various anti-oxidant enzymes, chaperones, and stress defense proteins. May also conjugate to NFKBIA, TFAP2A and FOS, negatively regulating their transcriptional activity, and to NR3C1, positively regulating its transcriptional activity. Covalent attachment to its substrates requires prior activation by the E1 complex SAE1-SAE2 and linkage to the E2 enzyme UBE2I. In Homo sapiens (Human), this protein is Small ubiquitin-related modifier 4 (SUMO4).